We begin with the raw amino-acid sequence, 179 residues long: Large ribosomal subunit protein uL6c (179 aa).

The protein belongs to the universal ribosomal protein uL6 family. In terms of assembly, part of the 50S ribosomal subunit.

It localises to the plastid. Its subcellular location is the chloroplast. Functionally, binds 23S rRNA. The protein is Large ribosomal subunit protein uL6c (rpl6) of Trieres chinensis (Marine centric diatom).